A 138-amino-acid polypeptide reads, in one-letter code: ATP synthase epsilon chain (138 aa).

This sequence belongs to the ATPase epsilon chain family. F-type ATPases have 2 components, CF(1) - the catalytic core - and CF(0) - the membrane proton channel. CF(1) has five subunits: alpha(3), beta(3), gamma(1), delta(1), epsilon(1). CF(0) has three main subunits: a, b and c.

The protein resides in the cell membrane. Functionally, produces ATP from ADP in the presence of a proton gradient across the membrane. In Streptococcus equi subsp. zooepidemicus (strain H70), this protein is ATP synthase epsilon chain.